Here is a 60-residue protein sequence, read N- to C-terminus: Large ribosomal subunit protein uL30 (60 aa).

The protein belongs to the universal ribosomal protein uL30 family. As to quaternary structure, part of the 50S ribosomal subunit.

The sequence is that of Large ribosomal subunit protein uL30 from Idiomarina loihiensis (strain ATCC BAA-735 / DSM 15497 / L2-TR).